We begin with the raw amino-acid sequence, 588 residues long: Putative pentatricopeptide repeat-containing protein At5g52630 (588 aa).

PPR repeat units follow at residues 14-48 (NYNQ…GLSL), 49-79 (IPLV…SPQK), 80-114 (SSTT…NLRP), 115-149 (DDHV…GYDA), 150-180 (DVFV…MPQR), 181-215 (NVVT…NLAV), 216-250 (NDYS…SFDS), 251-281 (SSFV…VPVK), 282-316 (NLGI…GMKP), 317-351 (NFIT…RIEP), and 352-386 (TDKH…PTES). Residues 387-462 (VWGALLTSCT…ETGLSWVEER (76 aa)) form a type E motif region. A type E(+) motif region spans residues 463-493 (NKVHTFAAGERRHEKSKEIYEKLAELGEEME). Positions 494–588 (KAGYIADTSY…DGKCSCNDYW (95 aa)) are type DYW motif.

It belongs to the PPR family. PCMP-H subfamily.

This Arabidopsis thaliana (Mouse-ear cress) protein is Putative pentatricopeptide repeat-containing protein At5g52630 (PCMP-H52).